A 361-amino-acid polypeptide reads, in one-letter code: Mitochondrial import receptor subunit TOM40 homolog (361 aa).

Residues 1 to 73 form a disordered region; that stretch reads MGNVLAASSP…GAAAASEDGS (73 aa). The span at 11–36 shows a compositional bias: pro residues; the sequence is PAGPPPPPTPSLVGLPPPPPSPPGFT. Residues 40 to 50 show a composition bias toward gly residues; the sequence is LGGGLGTGSST. The segment covering 51–69 has biased composition (low complexity); it reads GRGSERTPGAAASGAAAAS.

The protein belongs to the Tom40 family. Forms part of the preprotein translocase complex of the outer mitochondrial membrane (TOM complex) which consists of at least 7 different proteins (TOMM5, TOMM6, TOMM7, TOMM20, TOMM22, TOMM40 and TOMM70). Interacts with mitochondrial targeting sequences. Interacts with TIMM29; linking the TIM22 complex to the TOM complex. Forms a complex with BCAP31 (via C-terminus) which mediates the translocation of components of the mitochondrial membrane respiratory chain NADH dehydrogenase (Complex I) from the cytosol to the mitochondria. Interacts (via N-terminus) with CYP1A1 (via mitochondrial targeting signal); this interaction is required for CYP1A1 translocation across the mitochondrial outer membrane.

The protein localises to the mitochondrion outer membrane. Channel-forming protein essential for import of protein precursors into mitochondria. Plays a role in the assembly of the mitochondrial membrane respiratory chain NADH dehydrogenase (Complex I) by forming a complex with BCAP31 and mediating the translocation of Complex I components from the cytosol to the mitochondria. This Mus musculus (Mouse) protein is Mitochondrial import receptor subunit TOM40 homolog (Tomm40).